The primary structure comprises 455 residues: Phosphoglucosamine mutase (455 aa).

The active-site Phosphoserine intermediate is the S104. Positions 104, 253, 255, and 257 each coordinate Mg(2+). Phosphoserine is present on S104.

This sequence belongs to the phosphohexose mutase family. Mg(2+) serves as cofactor. In terms of processing, activated by phosphorylation.

The catalysed reaction is alpha-D-glucosamine 1-phosphate = D-glucosamine 6-phosphate. Catalyzes the conversion of glucosamine-6-phosphate to glucosamine-1-phosphate. This is Phosphoglucosamine mutase from Psychrobacter arcticus (strain DSM 17307 / VKM B-2377 / 273-4).